A 493-amino-acid polypeptide reads, in one-letter code: MYIGIDCGTQGTKAIVLDSVQKKVIGVGYAKHELITQSNGRREQQPNWWIEALQQALQIALKQAKNSPHFSPNLVKGIGISGQQHGLVMLDKNDRPLYKAKLWCDTETATENDILIEKLGGQTAVFEKLGIICQTGYTASKLSWFRQNYPDKFANIRKIMLPHDYLNYWLTGKFCTEFGDASGSGYFDVVKREWKREVFKYLAPELNMDEVLPKLLSAEQKIGVIKPEIATLFGFNENVIVSTGGGDNMMGAIGTGNIREGIATMSLGTSGTLYAYTQKPLLNLPPMIANFCSSNNGWLPLVCVMNITSSNKQLMNLLNIDIEELNQLAQQAPIGANGITILPFFNGERVPPLPNTKASILGLDSSNFTRENLCRAMMESATFTLRYGLDLFRQAGLKTSQIRLIGGGAKSSFWRQMIADVMNSEVVCLQEEEAAALGGAIQAMWANGEGELEFLCETFIHLDENSKAYPNLSQVKNYQNAYERYLTHLSQLY.

84-85 provides a ligand contact to substrate; it reads QH. The Proton acceptor role is filled by D247.

This sequence belongs to the FGGY kinase family.

The catalysed reaction is D-xylulose + ATP = D-xylulose 5-phosphate + ADP + H(+). Functionally, catalyzes the phosphorylation of D-xylulose to D-xylulose 5-phosphate. The polypeptide is Xylulose kinase (Haemophilus influenzae (strain ATCC 51907 / DSM 11121 / KW20 / Rd)).